Consider the following 158-residue polypeptide: Cyclic pyranopterin monophosphate synthase (158 aa).

Substrate contacts are provided by residues 75 to 77 (LCH) and 113 to 114 (ME). Asp-128 is a catalytic residue.

The protein belongs to the MoaC family. Homohexamer; trimer of dimers.

The catalysed reaction is (8S)-3',8-cyclo-7,8-dihydroguanosine 5'-triphosphate = cyclic pyranopterin phosphate + diphosphate. It participates in cofactor biosynthesis; molybdopterin biosynthesis. Catalyzes the conversion of (8S)-3',8-cyclo-7,8-dihydroguanosine 5'-triphosphate to cyclic pyranopterin monophosphate (cPMP). In Acidiphilium cryptum (strain JF-5), this protein is Cyclic pyranopterin monophosphate synthase.